The chain runs to 295 residues: Bifunctional protein FolD (295 aa).

NADP(+)-binding positions include 166–168 (GRS), Ser-191, and Ile-232.

Belongs to the tetrahydrofolate dehydrogenase/cyclohydrolase family. In terms of assembly, homodimer.

The catalysed reaction is (6R)-5,10-methylene-5,6,7,8-tetrahydrofolate + NADP(+) = (6R)-5,10-methenyltetrahydrofolate + NADPH. It catalyses the reaction (6R)-5,10-methenyltetrahydrofolate + H2O = (6R)-10-formyltetrahydrofolate + H(+). Its pathway is one-carbon metabolism; tetrahydrofolate interconversion. Catalyzes the oxidation of 5,10-methylenetetrahydrofolate to 5,10-methenyltetrahydrofolate and then the hydrolysis of 5,10-methenyltetrahydrofolate to 10-formyltetrahydrofolate. This is Bifunctional protein FolD from Wolbachia sp. subsp. Brugia malayi (strain TRS).